The following is a 577-amino-acid chain: Arginine--tRNA ligase (577 aa).

Residues 122–132 carry the 'HIGH' region motif; that stretch reads PNVAKEMHVGH.

Belongs to the class-I aminoacyl-tRNA synthetase family. In terms of assembly, monomer.

It is found in the cytoplasm. It catalyses the reaction tRNA(Arg) + L-arginine + ATP = L-arginyl-tRNA(Arg) + AMP + diphosphate. This Shigella flexneri serotype 5b (strain 8401) protein is Arginine--tRNA ligase.